Consider the following 519-residue polypeptide: Bifunctional purine biosynthesis protein PurH (519 aa).

The 147-residue stretch at 1–147 (MAKITRALIS…KNNHDVTVLV (147 aa)) folds into the MGS-like domain.

Belongs to the PurH family.

It catalyses the reaction (6R)-10-formyltetrahydrofolate + 5-amino-1-(5-phospho-beta-D-ribosyl)imidazole-4-carboxamide = 5-formamido-1-(5-phospho-D-ribosyl)imidazole-4-carboxamide + (6S)-5,6,7,8-tetrahydrofolate. The enzyme catalyses IMP + H2O = 5-formamido-1-(5-phospho-D-ribosyl)imidazole-4-carboxamide. The protein operates within purine metabolism; IMP biosynthesis via de novo pathway; 5-formamido-1-(5-phospho-D-ribosyl)imidazole-4-carboxamide from 5-amino-1-(5-phospho-D-ribosyl)imidazole-4-carboxamide (10-formyl THF route): step 1/1. Its pathway is purine metabolism; IMP biosynthesis via de novo pathway; IMP from 5-formamido-1-(5-phospho-D-ribosyl)imidazole-4-carboxamide: step 1/1. This chain is Bifunctional purine biosynthesis protein PurH, found in Trichlorobacter lovleyi (strain ATCC BAA-1151 / DSM 17278 / SZ) (Geobacter lovleyi).